A 338-amino-acid polypeptide reads, in one-letter code: Lipoate-protein ligase A (338 aa).

Positions 29–216 (PADQRVLFLW…AYCEHYQQQV (188 aa)) constitute a BPL/LPL catalytic domain. Residues Arg71, 76-79 (GAVF), and Lys134 each bind ATP. Lys134 is a (R)-lipoate binding site.

This sequence belongs to the LplA family. Monomer.

Its subcellular location is the cytoplasm. It carries out the reaction L-lysyl-[lipoyl-carrier protein] + (R)-lipoate + ATP = N(6)-[(R)-lipoyl]-L-lysyl-[lipoyl-carrier protein] + AMP + diphosphate + H(+). The protein operates within protein modification; protein lipoylation via exogenous pathway; protein N(6)-(lipoyl)lysine from lipoate: step 1/2. It functions in the pathway protein modification; protein lipoylation via exogenous pathway; protein N(6)-(lipoyl)lysine from lipoate: step 2/2. In terms of biological role, catalyzes both the ATP-dependent activation of exogenously supplied lipoate to lipoyl-AMP and the transfer of the activated lipoyl onto the lipoyl domains of lipoate-dependent enzymes. In Vibrio cholerae serotype O1 (strain ATCC 39541 / Classical Ogawa 395 / O395), this protein is Lipoate-protein ligase A.